Consider the following 207-residue polypeptide: Large ribosomal subunit protein uL4 (207 aa).

The segment at 54 to 74 is disordered; it reads RSDVRGGGKKPYRQKGTGNAR.

Belongs to the universal ribosomal protein uL4 family. Part of the 50S ribosomal subunit.

Functionally, one of the primary rRNA binding proteins, this protein initially binds near the 5'-end of the 23S rRNA. It is important during the early stages of 50S assembly. It makes multiple contacts with different domains of the 23S rRNA in the assembled 50S subunit and ribosome. Its function is as follows. Forms part of the polypeptide exit tunnel. In Magnetococcus marinus (strain ATCC BAA-1437 / JCM 17883 / MC-1), this protein is Large ribosomal subunit protein uL4.